Here is a 198-residue protein sequence, read N- to C-terminus: Suppressor of cytokine signaling 2 (198 aa).

Residues 1–29 (MTLRCLEPSGNGADRTRSQWGTAGLPEEQ) form a disordered region. The interaction with AREL1 stretch occupies residues 1–75 (MTLRCLEPSG…PEGTFLIRDS (75 aa)). The residue at position 30 (S30) is a Phosphoserine. Positions 48–156 (WYWGSMTVNE…TVHLYLTKPL (109 aa)) constitute an SH2 domain. S52 carries the phosphoserine; by PKC modification. Residues 151-197 (YLTKPLYTSAPTLQHFCRLAINKCTGTIWGLPLPTRLKDYLEEYKFQ) form the SOCS box domain. A Glycyl lysine isopeptide (Lys-Gly) (interchain with G-Cter in ubiquitin) cross-link involves residue K173.

Substrate-recognition component of the ECS(SOCS2) complex, composed of SOCS2, CUL5, ELOB, ELOC and RNF7/RBX2. Interacts with IGF1R. Interacts with DCUN1D1. Ubiquitinated; mediated by AREL1 and leading to its subsequent proteasomal degradation. Ubiquitination is dependent on phosphorylation at Ser-52, by PKC and is stimulated by LPS. In terms of processing, phosphorylation at Ser-52 by PKC facilitates its ubiquitination and proteasomal degradation. As to expression, expressed primarily in the testis, some expression in liver and lung.

The protein resides in the cytoplasm. Its pathway is protein modification; protein ubiquitination. Substrate-recognition component of a cullin-5-RING E3 ubiquitin-protein ligase complex (ECS complex, also named CRL5 complex), which mediates the ubiquitination and subsequent proteasomal degradation of target proteins, such as EPOR and GHR. Specifically recognizes and binds phosphorylated proteins via its SH2 domain, promoting their ubiquitination. The ECS(SOCS2) complex acts as a key regulator of growth hormone receptor (GHR) levels by mediating ubiquitination and degradation of GHR, following GHR phosphorylation by JAK2. The ECS(SOCS2) also catalyzes ubiquitination and degradation of JAK2-phosphorylated EPOR. In Mus musculus (Mouse), this protein is Suppressor of cytokine signaling 2.